We begin with the raw amino-acid sequence, 467 residues long: Acid phosphatase PHO11 (467 aa).

A signal peptide spans M1–A17. H75 acts as the Nucleophile in catalysis. N97, N162, N192, N250, and N315 each carry an N-linked (GlcNAc...) asparagine glycan. The active-site Proton donor is D338. N-linked (GlcNAc...) asparagine glycosylation is found at N356, N390, N439, N445, and N461.

Belongs to the histidine acid phosphatase family. Post-translationally, glycosylated during secretion across the membrane.

The catalysed reaction is a phosphate monoester + H2O = an alcohol + phosphate. This Saccharomyces cerevisiae (strain ATCC 204508 / S288c) (Baker's yeast) protein is Acid phosphatase PHO11 (PHO11).